Here is a 494-residue protein sequence, read N- to C-terminus: NADPH:adrenodoxin oxidoreductase, mitochondrial (494 aa).

Residues 1 to 34 (MAPRCWHWWRWSAWSGLRPSPSRSTPTPGFCQKF) constitute a mitochondrion transit peptide. FAD is bound by residues A51, E72, L80, and V116. NADP(+) is bound by residues 187–190 (QGNV), 231–232 (RR), and E243. At S313 the chain carries Phosphoserine. Residues W401 and 408-410 (GVI) each bind FAD. G408 contacts NADP(+).

Belongs to the ferredoxin--NADP reductase type 1 family. As to quaternary structure, monomer. Interacts directly with FDX1. The cofactor is FAD. In terms of tissue distribution, expressed in the adrenal, testis and ovary and to a lesser extent in the liver and kidney.

It is found in the mitochondrion inner membrane. It carries out the reaction 2 reduced [adrenodoxin] + NADP(+) + H(+) = 2 oxidized [adrenodoxin] + NADPH. The enzyme catalyses 2 reduced [2Fe-2S]-[ferredoxin] + NADP(+) + H(+) = 2 oxidized [2Fe-2S]-[ferredoxin] + NADPH. Its pathway is steroid metabolism; cholesterol metabolism. Functionally, serves as the first electron transfer protein in all the mitochondrial P450 systems including cholesterol side chain cleavage in all steroidogenic tissues, steroid 11-beta hydroxylation in the adrenal cortex, 25-OH-vitamin D3-24 hydroxylation in the kidney, and sterol C-27 hydroxylation in the liver. Also acts as a ferredoxin--NADP(+) reductase essential for coenzyme Q biosynthesis: together with FDX2, transfers the electrons required for the hydroxylation reaction performed by COQ6. The chain is NADPH:adrenodoxin oxidoreductase, mitochondrial (Fdxr) from Mus musculus (Mouse).